The chain runs to 249 residues: INO80 complex subunit 1 (249 aa).

C2H2-type zinc fingers lie at residues 73–100 (YTCE…LRSH) and 106–131 (FICS…RTVH).

In terms of assembly, component of the INO80 chromatin remodeling complex.

The protein localises to the nucleus. The protein resides in the cytoplasm. In terms of biological role, component of the INO80 complex which remodels chromatin by shifting nucleosomes and is involved in DNA repair. The sequence is that of INO80 complex subunit 1 (iec1) from Schizosaccharomyces pombe (strain 972 / ATCC 24843) (Fission yeast).